A 264-amino-acid chain; its full sequence is Small ribosomal subunit protein uS3 (264 aa).

One can recognise a KH type-2 domain in the interval 39–107 (VREFLKKKLK…PVHVNIEEIR (69 aa)). Residues 211–264 (NDAPVVEEPQEERRKRPGRPEGRRREGEGRPGGQRRGAGAGGRRSGGADAKTGE) are disordered. A compositionally biased stretch (basic and acidic residues) spans 221–239 (EERRKRPGRPEGRRREGEG). Residues 240–255 (RPGGQRRGAGAGGRRS) show a composition bias toward gly residues.

This sequence belongs to the universal ribosomal protein uS3 family. Part of the 30S ribosomal subunit. Forms a tight complex with proteins S10 and S14.

Binds the lower part of the 30S subunit head. Binds mRNA in the 70S ribosome, positioning it for translation. This chain is Small ribosomal subunit protein uS3, found in Ralstonia nicotianae (strain ATCC BAA-1114 / GMI1000) (Ralstonia solanacearum).